The primary structure comprises 456 residues: E3 ubiquitin-protein ligase RNF25 (456 aa).

The RWD domain maps to 18–127; it reads SEVEVLESIY…EKGKEILTDN (110 aa). Residues C134, C137, C152, H154, H157, C160, C195, and C198 each contribute to the Zn(2+) site. An RING-type zinc finger spans residues 134 to 199; it reads CVICLYGFQE…AVGVQCPVCR (66 aa). The interval 269 to 456 is disordered; that stretch reads LEPESAVDVS…PLGLESEEGS (188 aa). Polar residues predominate over residues 288-332; it reads SAEQSTSLADQSTLPTSLPMTTQYTYEKTSGAGPNQQRPGETQKS. 2 stretches are compositionally biased toward basic and acidic residues: residues 364–388 and 410–421; these read SEIH…EPRN and RTRDCARWERSK.

This sequence belongs to the RNF25 family. In terms of assembly, interacts with UBE2D2, and may also interact with UBE2E1 and UBE2E3. Interacts with RELA/p65. In terms of processing, ubiquitinated; autoubiquitinated. In terms of tissue distribution, ubiquitous.

The protein resides in the cytoplasm. It carries out the reaction S-ubiquitinyl-[E2 ubiquitin-conjugating enzyme]-L-cysteine + [acceptor protein]-L-lysine = [E2 ubiquitin-conjugating enzyme]-L-cysteine + N(6)-ubiquitinyl-[acceptor protein]-L-lysine.. It functions in the pathway protein modification; protein ubiquitination. Functionally, E3 ubiquitin-protein ligase that plays a key role in the RNF14-RNF25 translation quality control pathway, a pathway that takes place when a ribosome has stalled during translation, and which promotes ubiquitination and degradation of translation factors on stalled ribosomes. Catalyzes ubiquitination of RPS27A in response to ribosome collisions, promoting activation of RNF14. RNF25 catalyzes ubiquitination of other ribosomal proteins on stalled ribosomes, such as RPL0, RPL1, RPL12, RPS13 and RPS17. Also involved in ubiquitination and degradation of stalled ETF1/eRF1. Independently of its function in the response to stalled ribosomes, mediates ubiquitination and subsequent proteasomal degradation of NKD2. May also stimulate transcription mediated by NF-kappa-B via its interaction with RELA/p65. This is E3 ubiquitin-protein ligase RNF25 from Mus musculus (Mouse).